The primary structure comprises 777 residues: Zinc finger FYVE domain-containing protein 1 (777 aa).

Residues 416–777 (MAHSSFFPDE…FNCNKKPGDL (362 aa)) are required for localization in the lipid droplets. 2 consecutive FYVE-type zinc fingers follow at residues 598–659 (NSQI…DARN) and 715–775 (DHEI…KKPG). Zn(2+) contacts are provided by Cys-604, Cys-607, Cys-620, Cys-623, Cys-628, Cys-631, Cys-651, Cys-654, Cys-721, Cys-724, Cys-737, Cys-740, Cys-745, Cys-748, Cys-767, and Cys-770.

As to quaternary structure, interacts with RAB18 (in GTP-bound form). Interacts with BSCL2 in a RAB18-dependent manner. Interacts with ZW10. In terms of tissue distribution, ubiquitous.

The protein localises to the golgi apparatus. It is found in the golgi stack. Its subcellular location is the endoplasmic reticulum. The protein resides in the preautophagosomal structure. It localises to the lipid droplet. The protein localises to the mitochondrion. Plays a role in the formation of lipid droplets (LDs) which are storage organelles at the center of lipid and energy homeostasis. Regulates the morphology, size and distribution of LDs. Mediates the formation of endoplasmic reticulum-lipid droplets (ER-LD) contact sites by forming a complex with RAB18 and ZW10. Binds to phosphatidylinositol 3-phosphate (PtdIns3P) through FYVE-type zinc finger. The chain is Zinc finger FYVE domain-containing protein 1 (Zfyve1) from Mus musculus (Mouse).